We begin with the raw amino-acid sequence, 109 residues long: UPF0060 membrane protein PCC8801_1733 (109 aa).

4 consecutive transmembrane segments (helical) span residues 7-27 (LLYF…VWLW), 36-56 (YALL…LQTA), 58-78 (FGRV…LWGW), and 87-107 (SYDW…MYAP).

This sequence belongs to the UPF0060 family.

It is found in the cell inner membrane. This is UPF0060 membrane protein PCC8801_1733 from Rippkaea orientalis (strain PCC 8801 / RF-1) (Cyanothece sp. (strain PCC 8801)).